Here is a 108-residue protein sequence, read N- to C-terminus: Nucleoid-associated protein Bpet3552 (108 aa).

This sequence belongs to the YbaB/EbfC family. In terms of assembly, homodimer.

The protein resides in the cytoplasm. It is found in the nucleoid. Its function is as follows. Binds to DNA and alters its conformation. May be involved in regulation of gene expression, nucleoid organization and DNA protection. This chain is Nucleoid-associated protein Bpet3552, found in Bordetella petrii (strain ATCC BAA-461 / DSM 12804 / CCUG 43448).